Here is a 1080-residue protein sequence, read N- to C-terminus: ATP-dependent helicase/deoxyribonuclease subunit B (1080 aa).

Belongs to the helicase family. AddB/RexB type 2 subfamily. Heterodimer of AddA and RexB. Mg(2+) is required as a cofactor.

The heterodimer acts as both an ATP-dependent DNA helicase and an ATP-dependent, dual-direction single-stranded exonuclease. Recognizes the chi site generating a DNA molecule suitable for the initiation of homologous recombination. This subunit has 5' -&gt; 3' nuclease activity but not helicase activity. The polypeptide is ATP-dependent helicase/deoxyribonuclease subunit B (Streptococcus mutans serotype c (strain ATCC 700610 / UA159)).